A 499-amino-acid polypeptide reads, in one-letter code: Aspartyl/glutamyl-tRNA(Asn/Gln) amidotransferase subunit B (499 aa).

The protein belongs to the GatB/GatE family. GatB subfamily. In terms of assembly, heterotrimer of A, B and C subunits.

The enzyme catalyses L-glutamyl-tRNA(Gln) + L-glutamine + ATP + H2O = L-glutaminyl-tRNA(Gln) + L-glutamate + ADP + phosphate + H(+). The catalysed reaction is L-aspartyl-tRNA(Asn) + L-glutamine + ATP + H2O = L-asparaginyl-tRNA(Asn) + L-glutamate + ADP + phosphate + 2 H(+). In terms of biological role, allows the formation of correctly charged Asn-tRNA(Asn) or Gln-tRNA(Gln) through the transamidation of misacylated Asp-tRNA(Asn) or Glu-tRNA(Gln) in organisms which lack either or both of asparaginyl-tRNA or glutaminyl-tRNA synthetases. The reaction takes place in the presence of glutamine and ATP through an activated phospho-Asp-tRNA(Asn) or phospho-Glu-tRNA(Gln). The chain is Aspartyl/glutamyl-tRNA(Asn/Gln) amidotransferase subunit B from Bartonella tribocorum (strain CIP 105476 / IBS 506).